The following is a 164-amino-acid chain: ATP synthase subunit b 2 (164 aa).

The chain crosses the membrane as a helical span at residues 4 to 24 (TFWAFVGLVLFLALLAYFKVP).

It belongs to the ATPase B chain family. F-type ATPases have 2 components, F(1) - the catalytic core - and F(0) - the membrane proton channel. F(1) has five subunits: alpha(3), beta(3), gamma(1), delta(1), epsilon(1). F(0) has three main subunits: a(1), b(2) and c(10-14). The alpha and beta chains form an alternating ring which encloses part of the gamma chain. F(1) is attached to F(0) by a central stalk formed by the gamma and epsilon chains, while a peripheral stalk is formed by the delta and b chains.

The protein localises to the cell inner membrane. Functionally, f(1)F(0) ATP synthase produces ATP from ADP in the presence of a proton or sodium gradient. F-type ATPases consist of two structural domains, F(1) containing the extramembraneous catalytic core and F(0) containing the membrane proton channel, linked together by a central stalk and a peripheral stalk. During catalysis, ATP synthesis in the catalytic domain of F(1) is coupled via a rotary mechanism of the central stalk subunits to proton translocation. Its function is as follows. Component of the F(0) channel, it forms part of the peripheral stalk, linking F(1) to F(0). This chain is ATP synthase subunit b 2, found in Bartonella quintana (strain Toulouse) (Rochalimaea quintana).